Here is a 333-residue protein sequence, read N- to C-terminus: Photosystem II assembly protein Ycf48 (333 aa).

The N-terminal stretch at 1-25 is a signal peptide; the sequence is MRVKMFKPLRLVLLIAVSVLLMAAR.

It belongs to the Ycf48 family. In terms of assembly, part of early PSII assembly complexes which includes D1 (psbA) and PsbI; not found in mature PSII. Binds to the lumenal side of PSII complexes. Interacts with YidC.

It is found in the cellular thylakoid lumen. A factor required for optimal assembly of photosystem II (PSII), acting in the early stages of PSII assembly. Also plays a role in replacement of photodamaged D1 (psbA). Assists YidC in synthesis of chlorophyll-binding proteins. This Synechococcus sp. (strain JA-2-3B'a(2-13)) (Cyanobacteria bacterium Yellowstone B-Prime) protein is Photosystem II assembly protein Ycf48.